Reading from the N-terminus, the 375-residue chain is Chaperone protein DnaJ (375 aa).

One can recognise a J domain in the interval 4–68 (DYYETLGVDR…ETRARYDQFG (65 aa)). The segment at 134–216 (GGEKEIRIPH…CGGAGRKQET (83 aa)) adopts a CR-type zinc-finger fold. Zn(2+) is bound by residues Cys147, Cys150, Cys164, Cys167, Cys190, Cys193, Cys204, and Cys207. CXXCXGXG motif repeat units follow at residues 147–154 (CQVCNGSG), 164–171 (CSTCNGAG), 190–197 (CPDCNGAG), and 204–211 (CDACGGAG).

Belongs to the DnaJ family. As to quaternary structure, homodimer. Zn(2+) is required as a cofactor.

Its subcellular location is the cytoplasm. Participates actively in the response to hyperosmotic and heat shock by preventing the aggregation of stress-denatured proteins and by disaggregating proteins, also in an autonomous, DnaK-independent fashion. Unfolded proteins bind initially to DnaJ; upon interaction with the DnaJ-bound protein, DnaK hydrolyzes its bound ATP, resulting in the formation of a stable complex. GrpE releases ADP from DnaK; ATP binding to DnaK triggers the release of the substrate protein, thus completing the reaction cycle. Several rounds of ATP-dependent interactions between DnaJ, DnaK and GrpE are required for fully efficient folding. Also involved, together with DnaK and GrpE, in the DNA replication of plasmids through activation of initiation proteins. This chain is Chaperone protein DnaJ, found in Rippkaea orientalis (strain PCC 8801 / RF-1) (Cyanothece sp. (strain PCC 8801)).